The following is a 76-amino-acid chain: Small ribosomal subunit protein bS18 (76 aa).

This sequence belongs to the bacterial ribosomal protein bS18 family. As to quaternary structure, part of the 30S ribosomal subunit. Forms a tight heterodimer with protein bS6.

In terms of biological role, binds as a heterodimer with protein bS6 to the central domain of the 16S rRNA, where it helps stabilize the platform of the 30S subunit. This is Small ribosomal subunit protein bS18 from Alkaliphilus metalliredigens (strain QYMF).